We begin with the raw amino-acid sequence, 628 residues long: Vacuolar-sorting receptor 3 (628 aa).

A signal peptide spans methionine 1 to alanine 24. Residues arginine 25 to alanine 569 are Lumenal-facing. The PA domain maps to glutamine 56–isoleucine 168. N-linked (GlcNAc...) asparagine glycans are attached at residues asparagine 148, asparagine 294, and asparagine 434. 2 EGF-like domains span residues glutamate 416 to glutamate 466 and glycine 469 to glutamate 516. 7 cysteine pairs are disulfide-bonded: cysteine 420–cysteine 438, cysteine 427–cysteine 447, cysteine 449–cysteine 465, cysteine 473–cysteine 493, cysteine 480–cysteine 501, cysteine 503–cysteine 515, and cysteine 545–cysteine 558. The EGF-like 3; calcium-binding domain maps to aspartate 517–isoleucine 559. The helical transmembrane segment at tryptophan 570–valine 590 threads the bilayer. Over tyrosine 591–alanine 628 the chain is Cytoplasmic. Positions tyrosine 610 to leucine 613 match the Tyrosine-based internalization motif motif.

It belongs to the VSR (BP-80) family. Expressed in seeds, seedlings, roots, leaves, flowers and siliques.

The protein resides in the membrane. Its subcellular location is the golgi apparatus membrane. The protein localises to the cytoplasmic vesicle. It localises to the clathrin-coated vesicle membrane. It is found in the prevacuolar compartment membrane. Vacuolar-sorting receptor (VSR) involved in clathrin-coated vesicles sorting from Golgi apparatus to vacuoles. The sequence is that of Vacuolar-sorting receptor 3 (VSR3) from Arabidopsis thaliana (Mouse-ear cress).